Reading from the N-terminus, the 508-residue chain is tRNA-2-methylthio-N(6)-dimethylallyladenosine synthase (508 aa).

The tract at residues 1-21 is disordered; the sequence is MNEEQRKASGQVSSSDKKSEK. Positions 65 to 183 constitute an MTTase N-terminal domain; sequence RKFYIRTYGC…LPELLSECYL (119 aa). 6 residues coordinate [4Fe-4S] cluster: C74, C110, C144, C220, C224, and C227. The 231-residue stretch at 206–436 folds into the Radical SAM core domain; sequence RQGKIKGWVN…NALVNEISAK (231 aa). Positions 439-502 constitute a TRAM domain; that stretch reads KEYEGQTVEV…TWSLDGEMVG (64 aa).

It belongs to the methylthiotransferase family. MiaB subfamily. In terms of assembly, monomer. It depends on [4Fe-4S] cluster as a cofactor.

Its subcellular location is the cytoplasm. The enzyme catalyses N(6)-dimethylallyladenosine(37) in tRNA + (sulfur carrier)-SH + AH2 + 2 S-adenosyl-L-methionine = 2-methylsulfanyl-N(6)-dimethylallyladenosine(37) in tRNA + (sulfur carrier)-H + 5'-deoxyadenosine + L-methionine + A + S-adenosyl-L-homocysteine + 2 H(+). Its function is as follows. Catalyzes the methylthiolation of N6-(dimethylallyl)adenosine (i(6)A), leading to the formation of 2-methylthio-N6-(dimethylallyl)adenosine (ms(2)i(6)A) at position 37 in tRNAs that read codons beginning with uridine. The sequence is that of tRNA-2-methylthio-N(6)-dimethylallyladenosine synthase from Bacillus pumilus (strain SAFR-032).